We begin with the raw amino-acid sequence, 381 residues long: Cytosolic acyl coenzyme A thioester hydrolase (381 aa).

Residues 51–169 enclose the HotDog ACOT-type 1 domain; it reads LGHCVTMGRI…TLWYVPLSLK (119 aa). N67 is a catalytic residue. 2 positions are modified to N6-acetyllysine: K169 and K199. In terms of domain architecture, HotDog ACOT-type 2 spans 225-339; it reads SYSQSSLIHL…FFTYVSLNQE (115 aa). D256 is an active-site residue. K284 is subject to N6-acetyllysine. A disordered region spans residues 342-381; that stretch reads PMPVPQLVPETEDEKKRFEEGKGRYLQMKAKRQGHTEPQP. A compositionally biased stretch (basic and acidic residues) spans 354 to 364; the sequence is DEKKRFEEGKG.

As to quaternary structure, homohexamer. As to expression, widely expressed with highest levels in brain. High levels also found in thymus, large intestine and testis. Negligible in muscle and adipose tissue. In the central and peripheral nervous systems, displays a predominantly neuronal localization with highest expression in cell bodies and neurites.

Its subcellular location is the cytoplasm. The protein localises to the cytosol. The catalysed reaction is hexadecanoyl-CoA + H2O = hexadecanoate + CoA + H(+). It carries out the reaction dodecanoyl-CoA + H2O = dodecanoate + CoA + H(+). It catalyses the reaction tetradecanoyl-CoA + H2O = tetradecanoate + CoA + H(+). The enzyme catalyses decanoyl-CoA + H2O = decanoate + CoA + H(+). The catalysed reaction is octanoyl-CoA + H2O = octanoate + CoA + H(+). It carries out the reaction octadecanoyl-CoA + H2O = octadecanoate + CoA + H(+). It catalyses the reaction (9Z)-octadecenoyl-CoA + H2O = (9Z)-octadecenoate + CoA + H(+). Its pathway is lipid metabolism; fatty acid metabolism. Its function is as follows. Catalyzes the hydrolysis of acyl-CoAs into free fatty acids and coenzyme A (CoASH), regulating their respective intracellular levels. Preferentially hydrolyzes palmitoyl-CoA, but has a broad specificity acting on other fatty acyl-CoAs with chain-lengths of C8-C18. May play an important physiological function in brain. The chain is Cytosolic acyl coenzyme A thioester hydrolase (Acot7) from Mus musculus (Mouse).